Reading from the N-terminus, the 426-residue chain is UDP-N-acetylglucosamine 1-carboxyvinyltransferase (426 aa).

Residue 24–25 participates in phosphoenolpyruvate binding; it reads KN. Residue Arg-95 participates in UDP-N-acetyl-alpha-D-glucosamine binding. The Proton donor role is filled by Cys-119. Cys-119 is subject to 2-(S-cysteinyl)pyruvic acid O-phosphothioketal. Residues 124–128, Asp-308, and Val-330 contribute to the UDP-N-acetyl-alpha-D-glucosamine site; that span reads RPVDQ.

The protein belongs to the EPSP synthase family. MurA subfamily.

It is found in the cytoplasm. It catalyses the reaction phosphoenolpyruvate + UDP-N-acetyl-alpha-D-glucosamine = UDP-N-acetyl-3-O-(1-carboxyvinyl)-alpha-D-glucosamine + phosphate. It functions in the pathway cell wall biogenesis; peptidoglycan biosynthesis. Cell wall formation. Adds enolpyruvyl to UDP-N-acetylglucosamine. The chain is UDP-N-acetylglucosamine 1-carboxyvinyltransferase from Deinococcus radiodurans (strain ATCC 13939 / DSM 20539 / JCM 16871 / CCUG 27074 / LMG 4051 / NBRC 15346 / NCIMB 9279 / VKM B-1422 / R1).